The sequence spans 316 residues: MAQPSIGQKIVVDVPSTTANLGPGFDCLGAALDLNNRFAMRRIEGDSGRFELIIEGNEGSHLRGGPNNLIYRAAQRVWKAAGLEPVGLEAKVRLAVPPARGLGSSASAIVAGLVGANALVGEPLSKEKLLELAIDIEGHPDNVVPSLLGGLCLTAKAASQRWRVVRCVWINSVKVVVAIPSIRLSTSEARRAMPKDIPISDAVENLGALTLLLQGLRTGNGDLITDGMHDRLHEPYRWPLIKGGLDVRDAALNAGAWGCAISGAGPSVLALCPEDKGQAVSQAMVKAWEAEGVASRAPLLSIQTGGSHWQPQIEDE.

97–107 contacts ATP; sequence PPARGLGSSAS.

Belongs to the GHMP kinase family. Homoserine kinase subfamily.

Its subcellular location is the cytoplasm. It carries out the reaction L-homoserine + ATP = O-phospho-L-homoserine + ADP + H(+). It functions in the pathway amino-acid biosynthesis; L-threonine biosynthesis; L-threonine from L-aspartate: step 4/5. Functionally, catalyzes the ATP-dependent phosphorylation of L-homoserine to L-homoserine phosphate. The protein is Homoserine kinase of Prochlorococcus marinus (strain MIT 9303).